Here is a 106-residue protein sequence, read N- to C-terminus: Pyrimidine/purine nucleoside phosphorylase (106 aa).

This sequence belongs to the nucleoside phosphorylase PpnP family.

It catalyses the reaction a purine D-ribonucleoside + phosphate = a purine nucleobase + alpha-D-ribose 1-phosphate. The enzyme catalyses adenosine + phosphate = alpha-D-ribose 1-phosphate + adenine. The catalysed reaction is cytidine + phosphate = cytosine + alpha-D-ribose 1-phosphate. It carries out the reaction guanosine + phosphate = alpha-D-ribose 1-phosphate + guanine. It catalyses the reaction inosine + phosphate = alpha-D-ribose 1-phosphate + hypoxanthine. The enzyme catalyses thymidine + phosphate = 2-deoxy-alpha-D-ribose 1-phosphate + thymine. The catalysed reaction is uridine + phosphate = alpha-D-ribose 1-phosphate + uracil. It carries out the reaction xanthosine + phosphate = alpha-D-ribose 1-phosphate + xanthine. Its function is as follows. Catalyzes the phosphorolysis of diverse nucleosides, yielding D-ribose 1-phosphate and the respective free bases. Can use uridine, adenosine, guanosine, cytidine, thymidine, inosine and xanthosine as substrates. Also catalyzes the reverse reactions. This is Pyrimidine/purine nucleoside phosphorylase from Burkholderia ambifaria (strain ATCC BAA-244 / DSM 16087 / CCUG 44356 / LMG 19182 / AMMD) (Burkholderia cepacia (strain AMMD)).